The following is a 92-amino-acid chain: Small ribosomal subunit protein uS19 (92 aa).

It belongs to the universal ribosomal protein uS19 family.

Functionally, protein S19 forms a complex with S13 that binds strongly to the 16S ribosomal RNA. This chain is Small ribosomal subunit protein uS19, found in Chelativorans sp. (strain BNC1).